The primary structure comprises 538 residues: Efflux pump radE (538 aa).

3 stretches are compositionally biased toward basic and acidic residues: residues 1–12 (MATSRDFGREPP), 20–35 (EAGHTLHDGCQHVSEH), and 65–74 (DPKEEERDPN). Disordered regions lie at residues 1 to 35 (MATSRDFGREPPRQQQDSDEAGHTLHDGCQHVSEH) and 65 to 90 (DPKEEERDPNIVDWDGPDDPANPQNW). 12 helical membrane passes run 100-120 (AVLSIITFMVPLASSMFAPGI), 134-154 (LATFVVSVYILGLAAGPLVLA), 163-183 (VVIYHVGNVLFIIFTVACALS), 194-214 (FLCGLVGAGPIAIGGGTIADL), 225-245 (SVWSLGPLLGPSVGPVAGGFL), 253-273 (WIFWVLAITAGVITIAGLLVL), 327-347 (PICLVLSVYSAFVYAMIYFMI), 362-382 (EGIVGLVYIALGLGMLFGVVV), 409-429 (IPPTLLAGFLIPTGLFIYGWT), 436-456 (WAVPLLGALLAGMGICIINIS), 482-502 (IFGATFPLFALQMYETLGLGW), and 505-525 (SLLAFIAVAMFAIPPLLFYYG).

This sequence belongs to the major facilitator superfamily.

The protein localises to the cell membrane. Its function is as follows. Efflux pump that might be required for efficient secretion of radicicol or other secondary metabolies produced by the radicicol gene cluster. The polypeptide is Efflux pump radE (Floropilus chiversii (Chaetomium chiversii)).